A 94-amino-acid chain; its full sequence is Co-chaperonin GroES (94 aa).

Belongs to the GroES chaperonin family. In terms of assembly, heptamer of 7 subunits arranged in a ring. Interacts with the chaperonin GroEL.

The protein resides in the cytoplasm. In terms of biological role, together with the chaperonin GroEL, plays an essential role in assisting protein folding. The GroEL-GroES system forms a nano-cage that allows encapsulation of the non-native substrate proteins and provides a physical environment optimized to promote and accelerate protein folding. GroES binds to the apical surface of the GroEL ring, thereby capping the opening of the GroEL channel. The chain is Co-chaperonin GroES from Halothermothrix orenii (strain H 168 / OCM 544 / DSM 9562).